A 112-amino-acid chain; its full sequence is Nucleoid-associated protein RER_03900 (112 aa).

The protein belongs to the YbaB/EbfC family. In terms of assembly, homodimer.

The protein resides in the cytoplasm. Its subcellular location is the nucleoid. Its function is as follows. Binds to DNA and alters its conformation. May be involved in regulation of gene expression, nucleoid organization and DNA protection. This is Nucleoid-associated protein RER_03900 from Rhodococcus erythropolis (strain PR4 / NBRC 100887).